Here is a 258-residue protein sequence, read N- to C-terminus: Adenylate kinase (258 aa).

52 to 57 (GAGKGT) contributes to the ATP binding site. Positions 72 to 101 (ATGDMLRSQVAKKTELGKEAKKIMDQGGLV) are NMP. AMP-binding positions include T73, R78, 99-101 (GLV), 128-131 (GFPR), and Q135. Positions 169–206 (GRLVHPASGRSYHKVFNPPKQEMKDDITGEPLIQRSDD) are LID. ATP contacts are provided by residues R170 and 179 to 180 (SY). 2 residues coordinate AMP: R203 and R214. Q242 serves as a coordination point for ATP.

It belongs to the adenylate kinase family. AK2 subfamily. Monomer.

Its subcellular location is the cytoplasm. It is found in the cytosol. The protein localises to the mitochondrion intermembrane space. The enzyme catalyses AMP + ATP = 2 ADP. In terms of biological role, catalyzes the reversible transfer of the terminal phosphate group between ATP and AMP. Plays an important role in cellular energy homeostasis and in adenine nucleotide metabolism. Adenylate kinase activity is critical for regulation of the phosphate utilization and the AMP de novo biosynthesis pathways. The polypeptide is Adenylate kinase (adk1) (Aspergillus oryzae (strain ATCC 42149 / RIB 40) (Yellow koji mold)).